A 334-amino-acid chain; its full sequence is Ribosomal RNA small subunit methyltransferase C (334 aa).

This sequence belongs to the methyltransferase superfamily. RsmC family. Monomer.

It is found in the cytoplasm. The catalysed reaction is guanosine(1207) in 16S rRNA + S-adenosyl-L-methionine = N(2)-methylguanosine(1207) in 16S rRNA + S-adenosyl-L-homocysteine + H(+). In terms of biological role, specifically methylates the guanine in position 1207 of 16S rRNA in the 30S particle. The protein is Ribosomal RNA small subunit methyltransferase C of Idiomarina loihiensis (strain ATCC BAA-735 / DSM 15497 / L2-TR).